We begin with the raw amino-acid sequence, 605 residues long: Apoptosis-inducing factor 3 (605 aa).

The disordered stretch occupies residues 22 to 45; it reads KERGKEELSASGKGSPRAYQGNGT. The Rieske domain maps to 70-165; the sequence is AAVCHVKDLE…VKIEKEKVYV (96 aa). Cysteine 109, histidine 111, cysteine 128, and histidine 131 together coordinate [2Fe-2S] cluster. Residues 201-205, arginine 235, lysine 240, valine 270, aspartate 467, and tryptophan 514 each bind FAD; that span reads GAGAA.

The protein belongs to the FAD-dependent oxidoreductase family. Ubiquitous. Expressed in bone marrow, cerebral cortex, liver, ovary, thymus, thyroid gland and tongue (at protein level).

It is found in the mitochondrion. Induces apoptosis through a caspase dependent pathway. Reduces mitochondrial membrane potential. This Homo sapiens (Human) protein is Apoptosis-inducing factor 3 (AIFM3).